The primary structure comprises 96 residues: Small ribosomal subunit protein bS6 (96 aa).

Belongs to the bacterial ribosomal protein bS6 family.

Its function is as follows. Binds together with bS18 to 16S ribosomal RNA. The protein is Small ribosomal subunit protein bS6 (rpsF) of Mycobacterium leprae (strain TN).